The chain runs to 373 residues: tRNA (guanine(26)-N(2))-dimethyltransferase (373 aa).

The region spanning lysine 2–isoleucine 365 is the Trm1 methyltransferase domain. S-adenosyl-L-methionine is bound by residues arginine 35, arginine 66, aspartate 86, aspartate 113, and alanine 114.

The protein belongs to the class I-like SAM-binding methyltransferase superfamily. Trm1 family.

The catalysed reaction is guanosine(26) in tRNA + 2 S-adenosyl-L-methionine = N(2)-dimethylguanosine(26) in tRNA + 2 S-adenosyl-L-homocysteine + 2 H(+). Functionally, dimethylates a single guanine residue at position 26 of a number of tRNAs using S-adenosyl-L-methionine as donor of the methyl groups. In Methanococcus maripaludis (strain C5 / ATCC BAA-1333), this protein is tRNA (guanine(26)-N(2))-dimethyltransferase.